The chain runs to 427 residues: UPF0229 protein YeaH (427 aa).

A compositionally biased stretch (basic and acidic residues) spans 79 to 90 (NDHFVQNDRIER). The segment at 79–110 (NDHFVQNDRIERPQGGGGGSGSGQGQASQDGE) is disordered. Positions 92 to 102 (QGGGGGSGSGQ) are enriched in gly residues.

Belongs to the UPF0229 family.

This is UPF0229 protein YeaH from Escherichia coli (strain K12 / MC4100 / BW2952).